The chain runs to 426 residues: Antigen EM13 (426 aa).

An F-BAR domain is found at 1-240 (MIQERADIEK…TVAKVDADAD (240 aa)). Disordered stretches follow at residues 287 to 315 (LTSL…ISTS) and 350 to 369 (ISKE…FVDD). The segment covering 305–315 (TTDSGSNISTS) has biased composition (polar residues). In terms of domain architecture, SH3 spans 371-426 (RPGVPIRALYDYVGVEADELSFNSGDLFEKLEDEDEQGWCKGRKDGRVGLYPRQLR).

The polypeptide is Antigen EM13 (EM13) (Echinococcus multilocularis (Fox tapeworm)).